The primary structure comprises 488 residues: Glutamyl-tRNA(Gln) amidotransferase subunit A (488 aa).

Catalysis depends on charge relay system residues Lys77 and Ser152. Ser176 functions as the Acyl-ester intermediate in the catalytic mechanism.

The protein belongs to the amidase family. GatA subfamily. In terms of assembly, heterotrimer of A, B and C subunits.

The catalysed reaction is L-glutamyl-tRNA(Gln) + L-glutamine + ATP + H2O = L-glutaminyl-tRNA(Gln) + L-glutamate + ADP + phosphate + H(+). Its function is as follows. Allows the formation of correctly charged Gln-tRNA(Gln) through the transamidation of misacylated Glu-tRNA(Gln) in organisms which lack glutaminyl-tRNA synthetase. The reaction takes place in the presence of glutamine and ATP through an activated gamma-phospho-Glu-tRNA(Gln). This chain is Glutamyl-tRNA(Gln) amidotransferase subunit A, found in Streptococcus pyogenes serotype M5 (strain Manfredo).